Consider the following 782-residue polypeptide: LINE-1 type transposase domain-containing protein 1 (782 aa).

3 disordered regions span residues 1-30 (MSGVQSKAARLQKERKEKLSADRERKTATS), 90-200 (QEGD…GGAG), and 338-397 (NKGT…SAEE). Composition is skewed to basic and acidic residues over residues 11-27 (LQKERKEKLSADRERKT) and 95-107 (ISERPKPGEKVEE). Residue S136 is modified to Phosphoserine. Basic and acidic residues-rich tracts occupy residues 143-158 (SLERGGEALRGEHGRC) and 183-194 (EENRLKAPKESP). Over residues 347–396 (GEEEEISETQGEETSEGETSELGEEEGSESEEEEESSESEEEEESSESAE) the composition is skewed to acidic residues. S407, S409, S442, S478, S490, S559, and S567 each carry phosphoserine.

Belongs to the transposase 22 family.

The sequence is that of LINE-1 type transposase domain-containing protein 1 (L1td1) from Mus musculus (Mouse).